We begin with the raw amino-acid sequence, 913 residues long: Alanine--tRNA ligase (913 aa).

4 residues coordinate Zn(2+): H600, H604, C703, and H707.

It belongs to the class-II aminoacyl-tRNA synthetase family. The cofactor is Zn(2+).

It is found in the cytoplasm. The catalysed reaction is tRNA(Ala) + L-alanine + ATP = L-alanyl-tRNA(Ala) + AMP + diphosphate. Catalyzes the attachment of alanine to tRNA(Ala) in a two-step reaction: alanine is first activated by ATP to form Ala-AMP and then transferred to the acceptor end of tRNA(Ala). Also edits incorrectly charged Ser-tRNA(Ala) and Gly-tRNA(Ala) via its editing domain. The polypeptide is Alanine--tRNA ligase (Methanothrix thermoacetophila (strain DSM 6194 / JCM 14653 / NBRC 101360 / PT) (Methanosaeta thermophila)).